The following is a 356-amino-acid chain: Beta-hexosaminidase (356 aa).

Residues Asp-75, Arg-83, Arg-150, and 180-181 contribute to the substrate site; that span reads KH. His-193 serves as the catalytic Proton donor/acceptor. Asp-264 (nucleophile) is an active-site residue.

This sequence belongs to the glycosyl hydrolase 3 family. NagZ subfamily.

Its subcellular location is the cytoplasm. The enzyme catalyses Hydrolysis of terminal non-reducing N-acetyl-D-hexosamine residues in N-acetyl-beta-D-hexosaminides.. It functions in the pathway cell wall biogenesis; peptidoglycan recycling. In terms of biological role, plays a role in peptidoglycan recycling by cleaving the terminal beta-1,4-linked N-acetylglucosamine (GlcNAc) from peptide-linked peptidoglycan fragments, giving rise to free GlcNAc, anhydro-N-acetylmuramic acid and anhydro-N-acetylmuramic acid-linked peptides. This is Beta-hexosaminidase from Aromatoleum aromaticum (strain DSM 19018 / LMG 30748 / EbN1) (Azoarcus sp. (strain EbN1)).